The sequence spans 338 residues: S-adenosylmethionine:tRNA ribosyltransferase-isomerase (338 aa).

It belongs to the QueA family. Monomer.

The protein resides in the cytoplasm. The enzyme catalyses 7-aminomethyl-7-carbaguanosine(34) in tRNA + S-adenosyl-L-methionine = epoxyqueuosine(34) in tRNA + adenine + L-methionine + 2 H(+). It functions in the pathway tRNA modification; tRNA-queuosine biosynthesis. Functionally, transfers and isomerizes the ribose moiety from AdoMet to the 7-aminomethyl group of 7-deazaguanine (preQ1-tRNA) to give epoxyqueuosine (oQ-tRNA). The chain is S-adenosylmethionine:tRNA ribosyltransferase-isomerase from Francisella tularensis subsp. mediasiatica (strain FSC147).